A 412-amino-acid polypeptide reads, in one-letter code: 2-methylacyl-CoA dehydrogenase, mitochondrial (412 aa).

The transit peptide at 1–25 (MHKLFAVRSLSSAIVKSFKSLQNQQ) directs the protein to the mitochondrion. FAD contacts are provided by residues 154 to 163 (LAMSEPNAGS) and 187 to 189 (WCT). Serine 163 is a substrate binding site. Substrate is bound by residues 209-210 (SK), tyrosine 264, and 271-274 (DLER). The Proton acceptor role is filled by glutamate 273. Residues arginine 299, glutamine 310, and 367-371 (QCLGG) each bind FAD. Residue 394–395 (AG) coordinates substrate. 396-398 (TSE) serves as a coordination point for FAD.

This sequence belongs to the acyl-CoA dehydrogenase family. Homotetramer. The cofactor is FAD. As to expression, expressed in flowers.

It is found in the mitochondrion. The enzyme catalyses 2-methylbutanoyl-CoA + oxidized [electron-transfer flavoprotein] + H(+) = (2E)-2-methylbut-2-enoyl-CoA + reduced [electron-transfer flavoprotein]. In terms of biological role, short/branched-chain acyl-CoA dehydrogenase (SBCAD). Uses 2-methylbutanoyl-CoA as substrate. Minor activity with the straight-chain substrates, butanoyl-CoA, valeryl-CoA, hexanoyl-CoA, and octanoyl-CoA but no activity with isovaleryl-CoA. In Solanum tuberosum (Potato), this protein is 2-methylacyl-CoA dehydrogenase, mitochondrial (2MBCD).